The primary structure comprises 71 residues: Large ribosomal subunit protein bL31 (71 aa).

Residues Cys-16, Cys-18, Cys-38, and Cys-41 each contribute to the Zn(2+) site.

This sequence belongs to the bacterial ribosomal protein bL31 family. Type A subfamily. Part of the 50S ribosomal subunit. Requires Zn(2+) as cofactor.

Its function is as follows. Binds the 23S rRNA. The polypeptide is Large ribosomal subunit protein bL31 (Neisseria gonorrhoeae (strain ATCC 700825 / FA 1090)).